Reading from the N-terminus, the 304-residue chain is UDP-N-acetylenolpyruvoylglucosamine reductase (304 aa).

The 166-residue stretch at 31–196 folds into the FAD-binding PCMH-type domain; it reads RVGGPAERFY…VAAELELAPG (166 aa). Arg-176 is a catalytic residue. Ser-225 functions as the Proton donor in the catalytic mechanism. Residue Glu-295 is part of the active site.

This sequence belongs to the MurB family. Requires FAD as cofactor.

The protein resides in the cytoplasm. It carries out the reaction UDP-N-acetyl-alpha-D-muramate + NADP(+) = UDP-N-acetyl-3-O-(1-carboxyvinyl)-alpha-D-glucosamine + NADPH + H(+). It participates in cell wall biogenesis; peptidoglycan biosynthesis. Its function is as follows. Cell wall formation. The polypeptide is UDP-N-acetylenolpyruvoylglucosamine reductase (Methylococcus capsulatus (strain ATCC 33009 / NCIMB 11132 / Bath)).